The chain runs to 76 residues: Large ribosomal subunit protein eL29 (76 aa).

The segment covering 1-29 (MAKSKNHTNHNQNKKAHRNGIKRPLRKRH) has biased composition (basic residues). Disordered regions lie at residues 1–33 (MAKS…ESTL) and 47–76 (RKGN…PVTL). At serine 31 the chain carries Phosphoserine. A compositionally biased stretch (basic and acidic residues) spans 51-62 (LSREESVKRYNE).

This sequence belongs to the eukaryotic ribosomal protein eL29 family.

The protein is Large ribosomal subunit protein eL29 (RpL29) of Drosophila melanogaster (Fruit fly).